Reading from the N-terminus, the 520-residue chain is Developmental regulatory protein wetA (520 aa).

Disordered stretches follow at residues 49–72, 104–165, 236–295, 367–453, and 471–496; these read GDLPPTVSTPKRHQSPQPWSNEWS, VPSR…MRSS, QSPS…WQSD, DHSF…GSNK, and LTGVAPSGSSKTKARREQEARDRRRK. Polar residues-rich tracts occupy residues 63–72, 104–114, and 155–165; these read SPQPWSNEWS, VPSRPTASHGL, and QSFSPSLMRSS. Over residues 237–251 the composition is skewed to low complexity; it reads SPSVSMPSPSIAMSA. The span at 252–261 shows a compositional bias: polar residues; the sequence is RQQQHYIAQP. Over residues 262–295 the composition is skewed to low complexity; sequence SSSSLTNSSPSSADDIFSSSHSSDPHSLSSWQSD. The segment covering 367-401 has biased composition (polar residues); sequence DHSFSSSNMLPATPQKFDTSFNTSQVHNVSRSPSL. A compositionally biased stretch (basic residues) spans 420–429; sequence PTHRRTHSRK. Over residues 436–453 the composition is skewed to low complexity; sequence NAPKPAKASGSSSRGSNK.

It belongs to the wetA family.

Its function is as follows. BrlA, abaA and wetA are pivotal regulators of conidiophore development and conidium maturation. They act individually and together to regulate their own expression and that of numerous other sporulation-specific genes. Responsible for activating a set of genes whose products make up the final two conidial wall layers or direct their assembly and though this activity is responsible for acquisition of spore dormancy. This is Developmental regulatory protein wetA from Penicillium rubens (strain ATCC 28089 / DSM 1075 / NRRL 1951 / Wisconsin 54-1255) (Penicillium chrysogenum).